Here is a 479-residue protein sequence, read N- to C-terminus: Glutamate receptor U1 (479 aa).

The signal sequence occupies residues 1–17; sequence MEKSLLFLFAVTLLSVG. At 18-163 the chain is on the extracellular side; it reads CTDAGESKGS…LFGFLTPFSK (146 aa). N79 is a glycosylation site (N-linked (GlcNAc...) asparagine). Residues 164-184 traverse the membrane as a helical segment; the sequence is ETWIGILVAYMVTSLCLFLVG. The Cytoplasmic segment spans residues 185-229; that stretch reads RLSPCEWTELSTEQNNFTFLNSLWFGAGAFTLQGAEPHPKSVSAR. Residues 230–250 form a helical membrane-spanning segment; sequence IIAVIWWIFSIVLVAAYIASF. The Extracellular segment spans residues 251-414; it reads AAFLNSDSVQ…AGWNPVQPHT (164 aa). A glycan (N-linked (GlcNAc...) asparagine) is linked at N282. Residues 415–435 traverse the membrane as a helical segment; that stretch reads LGGIFLILGIGLALGVIAALI. Topologically, residues 436 to 479 are cytoplasmic; sequence ELVLKARNNADQQKKSCCSAFSEEMGERLGTNKENQGAVDSVKS.

The protein belongs to the glutamate-gated ion channel (TC 1.A.10.1) family. As to quaternary structure, homomeric.

Its subcellular location is the cell membrane. It is found in the postsynaptic cell membrane. Receptor for glutamate. L-glutamate acts as an excitatory neurotransmitter at many synapses in the central nervous system. The postsynaptic actions of Glu are mediated by a variety of receptors that are named according to their selective agonists. This receptor binds domoate &gt; kainate &gt; AMPA &gt; NBQX &gt; glutamate. In Xenopus laevis (African clawed frog), this protein is Glutamate receptor U1 (kbp).